Here is a 1489-residue protein sequence, read N- to C-terminus: Ras GTPase-activating-like protein rng2 (1489 aa).

A Calponin-homology (CH) domain is found at 41 to 147; that stretch reads LCRVDEAKKW…YCIHALSYFL (107 aa). IQ domains lie at 359-388, 389-418, 418-449, 535-564, 565-594, and 655-684; these read QSSS…AYDE, LVNW…QEEA, ATKS…DLFT, ELDN…KLKA, STSS…SFQK, and FIPE…NFHK. The stretch at 734-770 forms a coiled coil; sequence EEEVLLEKMRKEIVQQVRDNEEIEVHINELDVKIALL. Residues 870–1110 form the Ras-GAP domain; it reads VLLLRFISQV…QDTMLMLERL (241 aa). A coiled-coil region spans residues 1330-1364; that stretch reads QSLLNLREKRAFLDSQLKSYNEYIEQAMETLQSKK.

As to quaternary structure, interacts with calmodulin cam1.

The protein resides in the cytoplasm. It localises to the cytoskeleton. The protein localises to the nucleus envelope. Its subcellular location is the microtubule organizing center. It is found in the spindle pole body. Component of the contractile F-actin ring; required for its construction following assembly of F-actin at the division site. This is Ras GTPase-activating-like protein rng2 from Schizosaccharomyces pombe (strain 972 / ATCC 24843) (Fission yeast).